The chain runs to 138 residues: Spermatid nuclear transition protein 4 (138 aa).

Over residues 1-11 the composition is skewed to basic and acidic residues; that stretch reads AKVSRKPREPR. The disordered stretch occupies residues 1–138; it reads AKVSRKPREP…QGVTRRGRRY (138 aa). Ser4 is modified (phosphoserine; by PKC). The Nuclear localization signal motif lies at 5–23; that stretch reads RKPREPRTAVTQSTRRIKR. 3 stretches are compositionally biased toward basic residues: residues 19–34, 43–57, and 65–74; these read RRIKRKKTLSKPRSRG, MKIKRALRRNLRRKI, and KKAKKARKHF. A Phosphothreonine; by PKA modification is found at Thr26. Residues 54 to 72 carry the Nuclear localization signal motif; it reads RRKIQTSAGQPKKAKKARK. Residues 86 to 101 are compositionally biased toward low complexity; it reads NKKTNQNKRQNQNKRQ. The span at 120–131 shows a compositional bias: polar residues; it reads PTTSCKWCSQGV.

The protein localises to the nucleus. The protein resides in the chromosome. Its function is as follows. Involved in nuclear basic protein transition: histones are replaced by spermatid specific proteins which are themselves replaced by protamines in late spermatids. This chain is Spermatid nuclear transition protein 4 (TNP4), found in Sus scrofa (Pig).